Reading from the N-terminus, the 247-residue chain is MPNTPDRKYKRILLKLSGEQLMGDEGFGIDPKVLDKMALEIGQLVGIGVQVGLVIGGGNLFRGAALSRAGLDRVTGDHMGMLATVMNALAMRDALERSNISSTVMSAIPMHGVTDQYDRRKALRLLDNGEVVIFSAGTGNPFFTTDSAACLRGIEVNAELVLKATKVDGVYSADPMKDPTAVRYSKLTYEKVLTEQLGVMDLTAICLCQDHNMPVRVFQMDKQGALLNIVVGGDEGTLIQGKETEEA.

15–18 (KLSG) contributes to the ATP binding site. An involved in allosteric activation by GTP region spans residues 23 to 28 (GDEGFG). Position 57 (Gly-57) interacts with UMP. ATP contacts are provided by Gly-58 and Arg-62. UMP contacts are provided by residues Asp-77 and 138–145 (TGNPFFTT). ATP-binding residues include Thr-165, Tyr-171, and Asp-174.

This sequence belongs to the UMP kinase family. Homohexamer.

The protein resides in the cytoplasm. The catalysed reaction is UMP + ATP = UDP + ADP. The protein operates within pyrimidine metabolism; CTP biosynthesis via de novo pathway; UDP from UMP (UMPK route): step 1/1. With respect to regulation, allosterically activated by GTP. Inhibited by UTP. Catalyzes the reversible phosphorylation of UMP to UDP. This is Uridylate kinase from Saccharophagus degradans (strain 2-40 / ATCC 43961 / DSM 17024).